The sequence spans 488 residues: Glutamyl-tRNA(Gln) amidotransferase subunit A (488 aa).

Catalysis depends on charge relay system residues lysine 76 and serine 152. Catalysis depends on serine 176, which acts as the Acyl-ester intermediate.

The protein belongs to the amidase family. GatA subfamily. In terms of assembly, heterotrimer of A, B and C subunits.

It catalyses the reaction L-glutamyl-tRNA(Gln) + L-glutamine + ATP + H2O = L-glutaminyl-tRNA(Gln) + L-glutamate + ADP + phosphate + H(+). Its function is as follows. Allows the formation of correctly charged Gln-tRNA(Gln) through the transamidation of misacylated Glu-tRNA(Gln) in organisms which lack glutaminyl-tRNA synthetase. The reaction takes place in the presence of glutamine and ATP through an activated gamma-phospho-Glu-tRNA(Gln). The protein is Glutamyl-tRNA(Gln) amidotransferase subunit A of Oceanobacillus iheyensis (strain DSM 14371 / CIP 107618 / JCM 11309 / KCTC 3954 / HTE831).